Consider the following 202-residue polypeptide: Small ribosomal subunit protein uS4 (202 aa).

The span at Met-1–Arg-13 shows a compositional bias: basic residues. The tract at residues Met-1–Ser-43 is disordered. Positions Asn-90–Asn-152 constitute an S4 RNA-binding domain.

Belongs to the universal ribosomal protein uS4 family. As to quaternary structure, part of the 30S ribosomal subunit. Contacts protein S5. The interaction surface between S4 and S5 is involved in control of translational fidelity.

Its function is as follows. One of the primary rRNA binding proteins, it binds directly to 16S rRNA where it nucleates assembly of the body of the 30S subunit. In terms of biological role, with S5 and S12 plays an important role in translational accuracy. The sequence is that of Small ribosomal subunit protein uS4 from Prochlorococcus marinus (strain NATL2A).